Here is a 720-residue protein sequence, read N- to C-terminus: Connector enhancer of kinase suppressor of ras 1 (720 aa).

Positions Trp7–Leu70 constitute an SAM domain. Residues Asn78–Ala164 form the CRIC domain. The PDZ domain occupies Lys196 to Pro285. A disordered region spans residues Pro285–Arg390. Residues Arg304 to Ala317 show a composition bias toward low complexity. A phosphoserine mark is found at Ser307 and Ser314. The span at Glu348–Ile359 shows a compositional bias: pro residues. Basic residues predominate over residues Val379–Arg390. Positions Arg403–Ser502 constitute a PH domain. Residues Tyr504–Ser573 are disordered. The segment covering Cys518–Glu530 has biased composition (acidic residues). Low complexity predominate over residues Ser533–Pro546. Residues Pro553–Asp571 are compositionally biased toward polar residues. Positions Gln615–Asp646 form a coiled coil. The disordered stretch occupies residues Gln676 to Leu720. Residues Glu678–Ser695 are compositionally biased toward polar residues.

The protein belongs to the CNKSR family. In terms of assembly, interacts with RHO and RALGDS. In terms of processing, phosphorylated on tyrosine.

The protein localises to the cytoplasm. The protein resides in the membrane. Its function is as follows. May function as an adapter protein or regulator of Ras signaling pathways. The polypeptide is Connector enhancer of kinase suppressor of ras 1 (CNKSR1) (Homo sapiens (Human)).